Here is a 247-residue protein sequence, read N- to C-terminus: MSNVKTAMDTSNEESQLSYNASTSSSCAAGKEHATTPPITPIGSPTALGMGAFAIAFTTLSMSLMEWRGAAITNAYIGNCFFTAGLGLVLVAQWELVRGNSYGHTVFGGFGLFNLAFGAINAPAFGVADAFKDDPAALSNALGYFLLVWGVFVLFFTIAAMPMNLVYTAMLGTSQITYTLLAASYFAMADEKATAGVGLKKAAGAFGFVSGLLAWYVVAHLMCQDALFFSFPLGDTSRLYARLRRNR.

N-linked (GlcNAc...) asparagine glycosylation occurs at N20. Helical transmembrane passes span 37-57 (PPIT…AIAF), 71-91 (AITN…LVLV), 106-126 (VFGG…PAFG), 141-161 (ALGY…IAAM), 169-189 (AMLG…FAMA), and 202-222 (AAGA…AHLM).

The protein belongs to the acetate uptake transporter (AceTr) (TC 2.A.96) family.

Its subcellular location is the endoplasmic reticulum membrane. Its pathway is mycotoxin biosynthesis; patulin biosynthesis. In terms of biological role, acetate transporter protein; part of the gene cluster that mediates the biosynthesis of patulin, an acetate-derived tetraketide mycotoxin produced by several fungal species that shows antimicrobial properties against several bacteria. May be involved in the uptake of acetate, a substrate for the synthesis of 6-methylsalicylic acid by the polyketide synthase patK. This Aspergillus clavatus (strain ATCC 1007 / CBS 513.65 / DSM 816 / NCTC 3887 / NRRL 1 / QM 1276 / 107) protein is Acetate transporter protein patA.